Reading from the N-terminus, the 96-residue chain is uncharacterized protein (96 aa).

This is an uncharacterized protein from Homo sapiens (Human).